The primary structure comprises 341 residues: Ribosomal RNA small subunit methyltransferase H (341 aa).

S-adenosyl-L-methionine-binding positions include 47-49 (GGY), Asp-64, Phe-91, Asp-109, and Gln-116.

Belongs to the methyltransferase superfamily. RsmH family.

The protein resides in the cytoplasm. It catalyses the reaction cytidine(1402) in 16S rRNA + S-adenosyl-L-methionine = N(4)-methylcytidine(1402) in 16S rRNA + S-adenosyl-L-homocysteine + H(+). Its function is as follows. Specifically methylates the N4 position of cytidine in position 1402 (C1402) of 16S rRNA. This chain is Ribosomal RNA small subunit methyltransferase H, found in Rhizobium leguminosarum bv. trifolii (strain WSM2304).